Consider the following 371-residue polypeptide: DNA primase DnaG (371 aa).

Positions 173-248 (DEIILVEGRA…DIDYVAVAPP (76 aa)) constitute a Toprim domain. Mg(2+) contacts are provided by E179, D221, and D223.

The protein belongs to the archaeal DnaG primase family. In terms of assembly, forms a ternary complex with MCM helicase and DNA. Component of the archaeal exosome complex. The cofactor is Mg(2+).

The catalysed reaction is ssDNA + n NTP = ssDNA/pppN(pN)n-1 hybrid + (n-1) diphosphate.. Its function is as follows. RNA polymerase that catalyzes the synthesis of short RNA molecules used as primers for DNA polymerase during DNA replication. Also part of the exosome, which is a complex involved in RNA degradation. Acts as a poly(A)-binding protein that enhances the interaction between heteromeric, adenine-rich transcripts and the exosome. This is DNA primase DnaG from Nanoarchaeum equitans (strain Kin4-M).